Reading from the N-terminus, the 589-residue chain is Kelch-like protein 25 (589 aa).

Residues Thr-46–Glu-114 form the BTB domain. The BACK domain occupies Cys-149–Val-250. 6 Kelch repeats span residues Thr-296–Cys-340, Lys-341–Asn-388, Cys-389–Leu-444, Leu-446–Ser-492, Gln-493–Asn-538, and Lys-539–Lys-585.

Component of the BCR(KLHL25) E3 ubiquitin ligase complex, at least composed of CUL3, KLHL25 and RBX1.

It functions in the pathway protein modification; protein ubiquitination. Substrate-specific adapter of a BCR (BTB-CUL3-RBX1) E3 ubiquitin ligase complex involved in various processes, such as translation homeostasis and lipid synthesis. The BCR(KLHL25) ubiquitin ligase complex acts by mediating ubiquitination of hypophosphorylated EIF4EBP1 (4E-BP1): ubiquitination and subsequent degradation of hypophosphorylated EIF4EBP1 (4E-BP1) probably serves as a homeostatic mechanism to maintain translation and prevent eIF4E inhibition when eIF4E levels are low. The BCR(KLHL25) complex does not target EIF4EBP1 (4E-BP1) when it is hyperphosphorylated or associated with eIF4E. The BCR(KLHL25) complex also acts as a regulator of lipid synthesis by mediating ubiquitination and degradation of ACLY, thereby inhibiting lipid synthesis. BCR(KLHL25)-mediated degradation of ACLY promotes fatty acid oxidation and is required for differentiation of inducible regulatory T (iTreg) cells. The sequence is that of Kelch-like protein 25 from Rattus norvegicus (Rat).